Consider the following 474-residue polypeptide: Bifunctional ribulose 5-phosphate reductase/CDP-ribitol pyrophosphorylase Bcs1 (474 aa).

A ribitol-5-phosphate cytidylyltransferase region spans residues 1-238 (MNKNKNIGII…DKLFQSRSHF (238 aa)). Residues 250 to 474 (YDMKDQVLVV…ITNILADLYK (225 aa)) are ribulose-5-phosphate reductase.

In the N-terminal section; belongs to the IspD/TarI cytidylyltransferase family. It in the C-terminal section; belongs to the short-chain dehydrogenases/reductases (SDR) family. In terms of assembly, monomer.

It carries out the reaction D-ribitol 5-phosphate + CTP + H(+) = CDP-L-ribitol + diphosphate. The enzyme catalyses D-ribitol 5-phosphate + NADP(+) = D-ribulose 5-phosphate + NADPH + H(+). It functions in the pathway capsule biogenesis; capsule polysaccharide biosynthesis. In terms of biological role, catalyzes the NADPH-dependent reduction of D-ribulose 5-phosphate to D-ribitol 5-phosphate and the further reaction of D-ribitol 5-phosphate with CTP to form CDP-ribitol. This is Bifunctional ribulose 5-phosphate reductase/CDP-ribitol pyrophosphorylase Bcs1 from Haemophilus influenzae.